The chain runs to 188 residues: Adenine phosphoribosyltransferase (188 aa).

It belongs to the purine/pyrimidine phosphoribosyltransferase family. As to quaternary structure, homodimer.

The protein localises to the cytoplasm. It catalyses the reaction AMP + diphosphate = 5-phospho-alpha-D-ribose 1-diphosphate + adenine. It participates in purine metabolism; AMP biosynthesis via salvage pathway; AMP from adenine: step 1/1. Catalyzes a salvage reaction resulting in the formation of AMP, that is energically less costly than de novo synthesis. The polypeptide is Adenine phosphoribosyltransferase (Paraburkholderia phymatum (strain DSM 17167 / CIP 108236 / LMG 21445 / STM815) (Burkholderia phymatum)).